We begin with the raw amino-acid sequence, 421 residues long: Myb-related protein Pp2 (421 aa).

2 consecutive HTH myb-type domains span residues 9 to 61 (KVGL…TNYL) and 62 to 116 (RPDL…KKRL). DNA-binding regions (H-T-H motif) lie at residues 37–61 (WRAI…TNYL) and 89–112 (WSRI…NTRL). The disordered stretch occupies residues 119–240 (QGLDPNTHLP…VTTKSHEDHR (122 aa)). Residues 136 to 147 (DTEDDTDDEGGD) are compositionally biased toward acidic residues.

It localises to the nucleus. In terms of biological role, possible transcription activator. The sequence is that of Myb-related protein Pp2 (PP2) from Physcomitrium patens (Spreading-leaved earth moss).